A 76-amino-acid polypeptide reads, in one-letter code: MNCETKQRTQFECIYFSQYWAKGDFIAKRAPIGQWEPYSEESLLGIIVTSVCRIKVAMLKPEPPRDPHIPLMGDFN.

This is an uncharacterized protein from Escherichia coli (strain K12).